The chain runs to 472 residues: UDP-N-acetylmuramate--L-alanine ligase (472 aa).

118–124 (GTHGKTT) is an ATP binding site.

Belongs to the MurCDEF family.

Its subcellular location is the cytoplasm. It catalyses the reaction UDP-N-acetyl-alpha-D-muramate + L-alanine + ATP = UDP-N-acetyl-alpha-D-muramoyl-L-alanine + ADP + phosphate + H(+). Its pathway is cell wall biogenesis; peptidoglycan biosynthesis. In terms of biological role, cell wall formation. The protein is UDP-N-acetylmuramate--L-alanine ligase of Methylococcus capsulatus (strain ATCC 33009 / NCIMB 11132 / Bath).